Here is a 448-residue protein sequence, read N- to C-terminus: tRNA modification GTPase MnmE (448 aa).

3 residues coordinate (6S)-5-formyl-5,6,7,8-tetrahydrofolate: Arg24, Glu81, and Lys120. Residues 216–373 form the TrmE-type G domain; it reads GLNVVLVGAP…LKRTLLREAG (158 aa). Asn226 lines the K(+) pocket. GTP-binding positions include 226-231, 245-251, and 270-273; these read NVGKSS, TDIAGTT, and DTAG. Ser230 lines the Mg(2+) pocket. Positions 245, 247, and 250 each coordinate K(+). Thr251 is a binding site for Mg(2+). Lys448 lines the (6S)-5-formyl-5,6,7,8-tetrahydrofolate pocket.

Belongs to the TRAFAC class TrmE-Era-EngA-EngB-Septin-like GTPase superfamily. TrmE GTPase family. Homodimer. Heterotetramer of two MnmE and two MnmG subunits. The cofactor is K(+).

Its subcellular location is the cytoplasm. Functionally, exhibits a very high intrinsic GTPase hydrolysis rate. Involved in the addition of a carboxymethylaminomethyl (cmnm) group at the wobble position (U34) of certain tRNAs, forming tRNA-cmnm(5)s(2)U34. The sequence is that of tRNA modification GTPase MnmE from Neisseria meningitidis serogroup B (strain ATCC BAA-335 / MC58).